The chain runs to 336 residues: Dihydroorotate dehydrogenase (quinone) (336 aa).

Residues 62–66 (AGLDK) and T86 each bind FMN. Substrate is bound at residue K66. 111 to 115 (NRMGF) provides a ligand contact to substrate. FMN is bound by residues N139 and N172. N172 contacts substrate. Residue S175 is the Nucleophile of the active site. Residue N177 coordinates substrate. The FMN site is built by K217 and T245. Position 246–247 (246–247 (NT)) interacts with substrate. Residues G268, G297, and 318–319 (YS) contribute to the FMN site.

It belongs to the dihydroorotate dehydrogenase family. Type 2 subfamily. Monomer. FMN serves as cofactor.

The protein resides in the cell membrane. The enzyme catalyses (S)-dihydroorotate + a quinone = orotate + a quinol. Its pathway is pyrimidine metabolism; UMP biosynthesis via de novo pathway; orotate from (S)-dihydroorotate (quinone route): step 1/1. Functionally, catalyzes the conversion of dihydroorotate to orotate with quinone as electron acceptor. The sequence is that of Dihydroorotate dehydrogenase (quinone) from Sodalis glossinidius (strain morsitans).